A 280-amino-acid polypeptide reads, in one-letter code: Shikimate dehydrogenase (NADP(+)) (280 aa).

Shikimate contacts are provided by residues 20-22 and threonine 67; that span reads SLS. Lysine 71 acts as the Proton acceptor in catalysis. Shikimate-binding residues include asparagine 92 and aspartate 107. Residues 131–135 and glycine 220 contribute to the NADP(+) site; that span reads GAGGA. A shikimate-binding site is contributed by tyrosine 222. Glycine 243 serves as a coordination point for NADP(+).

The protein belongs to the shikimate dehydrogenase family. Homodimer.

It carries out the reaction shikimate + NADP(+) = 3-dehydroshikimate + NADPH + H(+). The protein operates within metabolic intermediate biosynthesis; chorismate biosynthesis; chorismate from D-erythrose 4-phosphate and phosphoenolpyruvate: step 4/7. Involved in the biosynthesis of the chorismate, which leads to the biosynthesis of aromatic amino acids. Catalyzes the reversible NADPH linked reduction of 3-dehydroshikimate (DHSA) to yield shikimate (SA). The polypeptide is Shikimate dehydrogenase (NADP(+)) (Maricaulis maris (strain MCS10) (Caulobacter maris)).